The primary structure comprises 231 residues: Ribose-5-phosphate isomerase A (231 aa).

Substrate is bound by residues 32 to 35, 85 to 88, and 98 to 101; these read TGST, DGAD, and KGGG. Glutamate 107 (proton acceptor) is an active-site residue. Lysine 125 serves as a coordination point for substrate.

The protein belongs to the ribose 5-phosphate isomerase family. Homodimer.

It carries out the reaction aldehydo-D-ribose 5-phosphate = D-ribulose 5-phosphate. The protein operates within carbohydrate degradation; pentose phosphate pathway; D-ribose 5-phosphate from D-ribulose 5-phosphate (non-oxidative stage): step 1/1. Its function is as follows. Catalyzes the reversible conversion of ribose-5-phosphate to ribulose 5-phosphate. The polypeptide is Ribose-5-phosphate isomerase A (Burkholderia orbicola (strain MC0-3)).